A 172-amino-acid polypeptide reads, in one-letter code: Adenine phosphoribosyltransferase (172 aa).

The protein belongs to the purine/pyrimidine phosphoribosyltransferase family. In terms of assembly, homodimer.

It localises to the cytoplasm. It catalyses the reaction AMP + diphosphate = 5-phospho-alpha-D-ribose 1-diphosphate + adenine. It functions in the pathway purine metabolism; AMP biosynthesis via salvage pathway; AMP from adenine: step 1/1. Functionally, catalyzes a salvage reaction resulting in the formation of AMP, that is energically less costly than de novo synthesis. This Staphylococcus epidermidis (strain ATCC 35984 / DSM 28319 / BCRC 17069 / CCUG 31568 / BM 3577 / RP62A) protein is Adenine phosphoribosyltransferase.